The following is a 333-amino-acid chain: Anthranilate phosphoribosyltransferase (333 aa).

Residues G80, 83–84 (GD), T88, 90–93 (NLST), 108–116 (KHGNRSASG), and S120 contribute to the 5-phospho-alpha-D-ribose 1-diphosphate site. G80 lines the anthranilate pocket. Residue S92 participates in Mg(2+) binding. N111 contacts anthranilate. R166 serves as a coordination point for anthranilate. Mg(2+) is bound by residues D224 and E225.

Belongs to the anthranilate phosphoribosyltransferase family. In terms of assembly, homodimer. The cofactor is Mg(2+).

It carries out the reaction N-(5-phospho-beta-D-ribosyl)anthranilate + diphosphate = 5-phospho-alpha-D-ribose 1-diphosphate + anthranilate. It functions in the pathway amino-acid biosynthesis; L-tryptophan biosynthesis; L-tryptophan from chorismate: step 2/5. In terms of biological role, catalyzes the transfer of the phosphoribosyl group of 5-phosphorylribose-1-pyrophosphate (PRPP) to anthranilate to yield N-(5'-phosphoribosyl)-anthranilate (PRA). The polypeptide is Anthranilate phosphoribosyltransferase (Pyrobaculum arsenaticum (strain DSM 13514 / JCM 11321 / PZ6)).